The chain runs to 436 residues: Trigger factor (436 aa).

A PPIase FKBP-type domain is found at glycine 163–proline 248.

Belongs to the FKBP-type PPIase family. Tig subfamily.

It localises to the cytoplasm. It carries out the reaction [protein]-peptidylproline (omega=180) = [protein]-peptidylproline (omega=0). In terms of biological role, involved in protein export. Acts as a chaperone by maintaining the newly synthesized protein in an open conformation. Functions as a peptidyl-prolyl cis-trans isomerase. The chain is Trigger factor from Bordetella parapertussis (strain 12822 / ATCC BAA-587 / NCTC 13253).